The primary structure comprises 259 residues: Protein unc-50 homolog (259 aa).

Methionine 1 bears the N-acetylmethionine mark. Residues 1–82 (MLPSTSLSSS…TKDQWARDDP (82 aa)) lie on the Cytoplasmic side of the membrane. Serine 6 bears the Phosphoserine mark. A helical transmembrane segment spans residues 83–103 (AFLVLLSIWLCVSTIGFGFVL). Residues 104–112 (DMGFFETIK) are Lumenal-facing. Residues 113-133 (LLLWVVFIDCVGVGLLISTLM) traverse the membrane as a helical segment. At 134 to 163 (WFVSNKYLVKRQSRDYDVEWGYAFDVHLNA) the chain is on the cytoplasmic side. A helical membrane pass occupies residues 164–184 (FYPLLVILHFIQLFFINHVIL). The Lumenal segment spans residues 185 to 187 (TDT). Residues 188–208 (FIGYLVGNTLWLIAVGYYIYV) form a helical membrane-spanning segment. Over 209–222 (TFLGYSALPFLKNT) the chain is Cytoplasmic. Residues 223-243 (VILLYPFAPLMVLYGLSLALG) traverse the membrane as a helical segment. The Lumenal segment spans residues 244-259 (WNFTHTLCSFYKYRVK).

Belongs to the unc-50 family. As to expression, highly expressed in periodontal ligament and bone marrow, but not in gingival fibroblasts.

The protein resides in the nucleus inner membrane. It is found in the golgi apparatus membrane. Involved in the cell surface expression of neuronal nicotinic receptors. Binds RNA. The protein is Protein unc-50 homolog (Unc50) of Mus musculus (Mouse).